Consider the following 500-residue polypeptide: NAD(P)H-quinone oxidoreductase chain 4, chloroplastic (500 aa).

14 helical membrane passes run 4–24, 37–57, 87–107, 113–130, 134–154, 167–187, 208–228, 242–262, 272–292, 305–325, 330–350, 386–406, 416–436, and 462–482; these read FPWL…IFFL, IFIC…HFQL, IGPI…AWPV, LFHF…GSFS, LLLF…LLSM, FILY…GIGL, ALEI…SPII, HYST…YGLV, AHSI…IYAA, IAYS…SITD, GAIL…FLAG, LALP…GIIT, ILIT…SLSM, and LFVL…PDFV.

Belongs to the complex I subunit 4 family.

The protein localises to the plastid. It localises to the chloroplast thylakoid membrane. The catalysed reaction is a plastoquinone + NADH + (n+1) H(+)(in) = a plastoquinol + NAD(+) + n H(+)(out). It carries out the reaction a plastoquinone + NADPH + (n+1) H(+)(in) = a plastoquinol + NADP(+) + n H(+)(out). The polypeptide is NAD(P)H-quinone oxidoreductase chain 4, chloroplastic (Vitis vinifera (Grape)).